Reading from the N-terminus, the 339-residue chain is MSNNNKYYDKSFSPLGYVANGQKGVMRSINWNVINDPKDLEVWTRVTQNFWLPEKIPVSNDLKSWNELTPEWKQLVTRTFTGLTLLDTIQCTLGDIAQIPNSLTDHEQFVYANFSFMVGVHARSYGTIFSTLNTSDEIEEAHEWVINNEKLQARAKFLVPYYTSDDPLKSKIAAALMPGFLLYGGFYLPFYLAARGKLPNTSDIIRLILRDKVIHNYYSGYKYRLKVQKLPKEKQEEYKKFVFEILYKLIELEKDFLRELYDGFGLADEAIAFSLYNAGKFLQNCGYESPFTPEETKISPEVFAQLSARADENHDFFSGNGSSYIMGVTEETQDDDWEF.

Residues aspartate 87 and histidine 121 each coordinate Fe cation. Tyrosine 125 is a catalytic residue. Histidine 215 is a binding site for Fe cation.

It belongs to the ribonucleoside diphosphate reductase small chain family. In terms of assembly, tetramer of two alpha and two beta subunits. Fe cation is required as a cofactor.

It carries out the reaction a 2'-deoxyribonucleoside 5'-diphosphate + [thioredoxin]-disulfide + H2O = a ribonucleoside 5'-diphosphate + [thioredoxin]-dithiol. Its function is as follows. Provides the precursors necessary for DNA synthesis. Catalyzes the biosynthesis of deoxyribonucleotides from the corresponding ribonucleotides. The polypeptide is Ribonucleoside-diphosphate reductase subunit beta (nrdF) (Mycoplasmoides gallisepticum (strain R(low / passage 15 / clone 2)) (Mycoplasma gallisepticum)).